A 754-amino-acid chain; its full sequence is ATP-dependent RNA helicase DRS1 (754 aa).

Disordered regions lie at residues 1–61 and 119–227; these read MVVG…NLDE and GLVK…GDEA. Residues 19-34 show a composition bias toward acidic residues; that stretch reads DSEDDVPILDSSDDEK. Over residues 40-51 the composition is skewed to basic residues; sequence TTKKRKGKNNKK. The segment covering 124–142 has biased composition (basic and acidic residues); sequence AHIDSKQEEETEKEKVEKE. Acidic residues-rich tracts occupy residues 167–193 and 202–211; these read NQSEEEEEEEEEEEEEEEEEEEEQEEM and DEIDEEDDSE. Ser210 is modified (phosphoserine). Residues 233 to 261 carry the Q motif motif; that stretch reads ENFNSLSLSRPVLKGLASLGYVKPSPIQS. Residues 264 to 439 enclose the Helicase ATP-binding domain; sequence IPIALLGKDI…SLSLKKPVRI (176 aa). ATP is bound at residue 277–284; the sequence is AVTGSGKT. Residues 387-390 carry the DEAD box motif; the sequence is DEAD. In terms of domain architecture, Helicase C-terminal spans 450–641; sequence KLTQEFVRIR…SMNDTIEDIL (192 aa). Positions 623–669 form a coiled coil; it reads IEETNKLVESMNDTIEDILVEEKEEKEILRAEMQLRKGENMLKHKKE. Positions 675 to 754 are disordered; it reads RRTWFQSESD…NKKKGFKSRR (80 aa). A compositionally biased stretch (basic residues) spans 696–707; the sequence is RNKKVTNSKKRK. Basic and acidic residues predominate over residues 724–736; the sequence is TKTDRIADQERTF. Residues 737–754 show a composition bias toward basic residues; it reads KKQKSTNSNKKKGFKSRR.

The protein belongs to the DEAD box helicase family. DDX27/DRS1 subfamily. As to quaternary structure, interacts with RRP1 and associates with pre-ribosomal particles.

The protein resides in the nucleus. It localises to the nucleolus. The catalysed reaction is ATP + H2O = ADP + phosphate + H(+). Functionally, ATP-binding RNA helicase involved in ribosome assembly. The chain is ATP-dependent RNA helicase DRS1 (DRS1) from Saccharomyces cerevisiae (strain YJM789) (Baker's yeast).